The primary structure comprises 185 residues: TATA-box-binding protein (185 aa).

Tandem repeats lie at residues 3-78 and 94-176.

It belongs to the TBP family.

General factor that plays a role in the activation of archaeal genes transcribed by RNA polymerase. Binds specifically to the TATA box promoter element which lies close to the position of transcription initiation. This chain is TATA-box-binding protein, found in Methanopyrus kandleri (strain AV19 / DSM 6324 / JCM 9639 / NBRC 100938).